We begin with the raw amino-acid sequence, 456 residues long: Putative F-box/LRR-repeat protein At5g02700 (456 aa).

The F-box domain occupies 26-72 (ADFINYMPDDILHHILSFIPTDLAMRTSVLSRRWRHVWCETPCLDIT). 5 LRR repeats span residues 126-154 (VRDFTYSKTYRFPDIFYLSSSLKLLDVTL), 177-202 (FCQIPDESIHNILSGCPILESLTLDT), 206-224 (LERLDLSKSPNLRRLDINQ), 271-300 (LSPLTADGYQTMALEMLSKFHNVKRLTVGE), and 330-355 (FVRSVIPGISRLLQNSPGLKKLRPST).

The protein is Putative F-box/LRR-repeat protein At5g02700 of Arabidopsis thaliana (Mouse-ear cress).